The chain runs to 317 residues: Ribosomal protein L11 methyltransferase (317 aa).

Residues Thr158, Gly179, Asp201, and Asn244 each contribute to the S-adenosyl-L-methionine site.

The protein belongs to the methyltransferase superfamily. PrmA family.

It is found in the cytoplasm. It carries out the reaction L-lysyl-[protein] + 3 S-adenosyl-L-methionine = N(6),N(6),N(6)-trimethyl-L-lysyl-[protein] + 3 S-adenosyl-L-homocysteine + 3 H(+). In terms of biological role, methylates ribosomal protein L11. The sequence is that of Ribosomal protein L11 methyltransferase from Streptococcus thermophilus (strain CNRZ 1066).